We begin with the raw amino-acid sequence, 314 residues long: Homoserine kinase (314 aa).

ATP is bound at residue 96 to 106 (PIGSGLGSSAC).

This sequence belongs to the GHMP kinase family. Homoserine kinase subfamily.

It is found in the cytoplasm. The enzyme catalyses L-homoserine + ATP = O-phospho-L-homoserine + ADP + H(+). It participates in amino-acid biosynthesis; L-threonine biosynthesis; L-threonine from L-aspartate: step 4/5. Functionally, catalyzes the ATP-dependent phosphorylation of L-homoserine to L-homoserine phosphate. This is Homoserine kinase from Histophilus somni (strain 129Pt) (Haemophilus somnus).